A 206-amino-acid chain; its full sequence is MNPIYFQARFLTSAPDLRRMPPDQGREVAFAGRSNVGKSSAINTLTNQKSLARTSKTPGRTQLINVFPITDEAALVDLPGYGYAKVPAAVRRRWDQVLPEYLAGRRALRGVVLVMDLRHPLTDFDRQMLDWCGHIGVPLHVLLTKADKFKAGAARNRGQNVGRQLRAEWPGVTWQIFSASKRMGVDEAHARLDEWLGLGPAAGEGR.

Residues 24-198 (QGREVAFAGR…HARLDEWLGL (175 aa)) form the EngB-type G domain. GTP contacts are provided by residues 32-39 (GRSNVGKS), 59-63 (GRTQL), 77-80 (DLPG), 144-147 (TKAD), and 177-179 (FSA). Mg(2+) is bound by residues serine 39 and threonine 61.

Belongs to the TRAFAC class TrmE-Era-EngA-EngB-Septin-like GTPase superfamily. EngB GTPase family. It depends on Mg(2+) as a cofactor.

Its function is as follows. Necessary for normal cell division and for the maintenance of normal septation. The polypeptide is Probable GTP-binding protein EngB (Alkalilimnicola ehrlichii (strain ATCC BAA-1101 / DSM 17681 / MLHE-1)).